A 127-amino-acid chain; its full sequence is D-ribose pyranase (127 aa).

H20 acts as the Proton donor in catalysis. Substrate is bound by residues D28, H94, and 116–118; that span reads YSN.

This sequence belongs to the RbsD / FucU family. RbsD subfamily. In terms of assembly, homodecamer.

Its subcellular location is the cytoplasm. The enzyme catalyses beta-D-ribopyranose = beta-D-ribofuranose. The protein operates within carbohydrate metabolism; D-ribose degradation; D-ribose 5-phosphate from beta-D-ribopyranose: step 1/2. Its function is as follows. Catalyzes the interconversion of beta-pyran and beta-furan forms of D-ribose. This is D-ribose pyranase from Cutibacterium acnes (strain DSM 16379 / KPA171202) (Propionibacterium acnes).